The chain runs to 300 residues: Ribonuclease HIII (300 aa).

The RNase H type-2 domain occupies 86 to 300 (RPRLGVDESG…FYEICDSTDI (215 aa)). Positions 92, 93, and 196 each coordinate a divalent metal cation.

It belongs to the RNase HII family. RnhC subfamily. Mn(2+) is required as a cofactor. The cofactor is Mg(2+).

It localises to the cytoplasm. It carries out the reaction Endonucleolytic cleavage to 5'-phosphomonoester.. Its function is as follows. Endonuclease that specifically degrades the RNA of RNA-DNA hybrids. This Chlamydia abortus (strain DSM 27085 / S26/3) (Chlamydophila abortus) protein is Ribonuclease HIII.